We begin with the raw amino-acid sequence, 402 residues long: Olfactomedin-like protein 1 (402 aa).

Positions methionine 1–aspartate 28 are cleaved as a signal peptide. N-linked (GlcNAc...) asparagine glycosylation occurs at asparagine 66. Residues serine 79 to isoleucine 133 adopt a coiled-coil conformation. 2 N-linked (GlcNAc...) asparagine glycosylation sites follow: asparagine 138 and asparagine 183. An Olfactomedin-like domain is found at serine 140–arginine 397. Residues cysteine 141 and cysteine 324 are joined by a disulfide bond.

In terms of processing, highly N-glycosylated. As to expression, mainly expressed in the small intestine, liver, lung and heart.

The protein localises to the secreted. The polypeptide is Olfactomedin-like protein 1 (OLFML1) (Homo sapiens (Human)).